The primary structure comprises 184 residues: uncharacterized protein (184 aa).

This is an uncharacterized protein from Methanocaldococcus jannaschii (strain ATCC 43067 / DSM 2661 / JAL-1 / JCM 10045 / NBRC 100440) (Methanococcus jannaschii).